A 269-amino-acid chain; its full sequence is Shikimate dehydrogenase (NADP(+)) (269 aa).

Shikimate-binding positions include Ser17–Ser19 and Thr64. Catalysis depends on Lys68, which acts as the Proton acceptor. Asp80 contacts NADP(+). Shikimate-binding residues include Asn89 and Asp105. Residues Gly130–Ala134, Asn154–Lys159, and Met213 contribute to the NADP(+) site. Residue Tyr215 coordinates shikimate. Gly237 contributes to the NADP(+) binding site.

The protein belongs to the shikimate dehydrogenase family. Homodimer.

The catalysed reaction is shikimate + NADP(+) = 3-dehydroshikimate + NADPH + H(+). The protein operates within metabolic intermediate biosynthesis; chorismate biosynthesis; chorismate from D-erythrose 4-phosphate and phosphoenolpyruvate: step 4/7. Involved in the biosynthesis of the chorismate, which leads to the biosynthesis of aromatic amino acids. Catalyzes the reversible NADPH linked reduction of 3-dehydroshikimate (DHSA) to yield shikimate (SA). This chain is Shikimate dehydrogenase (NADP(+)), found in Neisseria polysaccharea.